Reading from the N-terminus, the 252-residue chain is 2-succinyl-6-hydroxy-2,4-cyclohexadiene-1-carboxylate synthase (252 aa).

The protein belongs to the AB hydrolase superfamily. MenH family. As to quaternary structure, monomer.

It catalyses the reaction 5-enolpyruvoyl-6-hydroxy-2-succinyl-cyclohex-3-ene-1-carboxylate = (1R,6R)-6-hydroxy-2-succinyl-cyclohexa-2,4-diene-1-carboxylate + pyruvate. The protein operates within quinol/quinone metabolism; 1,4-dihydroxy-2-naphthoate biosynthesis; 1,4-dihydroxy-2-naphthoate from chorismate: step 3/7. Its pathway is quinol/quinone metabolism; menaquinone biosynthesis. Functionally, catalyzes a proton abstraction reaction that results in 2,5-elimination of pyruvate from 2-succinyl-5-enolpyruvyl-6-hydroxy-3-cyclohexene-1-carboxylate (SEPHCHC) and the formation of 2-succinyl-6-hydroxy-2,4-cyclohexadiene-1-carboxylate (SHCHC). This is 2-succinyl-6-hydroxy-2,4-cyclohexadiene-1-carboxylate synthase from Salmonella typhimurium (strain LT2 / SGSC1412 / ATCC 700720).